The primary structure comprises 80 residues: Putative ankyrin repeat protein RC0877 (80 aa).

One copy of the ANK repeat lies at 6–46 (SGGIPLHAVAKNVRCTSKDIKDYEIYKLLVSYGADINARVE).

The polypeptide is Putative ankyrin repeat protein RC0877 (Rickettsia conorii (strain ATCC VR-613 / Malish 7)).